The primary structure comprises 445 residues: 3-phosphoshikimate 1-carboxyvinyltransferase (445 aa).

The segment at 1 to 20 is disordered; sequence MSTSAAPTPLESRASGPLSG. Lysine 28, serine 29, and arginine 33 together coordinate 3-phosphoshikimate. Lysine 28 lines the phosphoenolpyruvate pocket. Phosphoenolpyruvate is bound by residues glycine 101 and arginine 129. Serine 175, glutamine 177, aspartate 328, and lysine 355 together coordinate 3-phosphoshikimate. Glutamine 177 serves as a coordination point for phosphoenolpyruvate. Aspartate 328 acts as the Proton acceptor in catalysis. Phosphoenolpyruvate is bound by residues arginine 359 and arginine 402.

It belongs to the EPSP synthase family. Monomer.

Its subcellular location is the cytoplasm. The enzyme catalyses 3-phosphoshikimate + phosphoenolpyruvate = 5-O-(1-carboxyvinyl)-3-phosphoshikimate + phosphate. It functions in the pathway metabolic intermediate biosynthesis; chorismate biosynthesis; chorismate from D-erythrose 4-phosphate and phosphoenolpyruvate: step 6/7. Functionally, catalyzes the transfer of the enolpyruvyl moiety of phosphoenolpyruvate (PEP) to the 5-hydroxyl of shikimate-3-phosphate (S3P) to produce enolpyruvyl shikimate-3-phosphate and inorganic phosphate. The protein is 3-phosphoshikimate 1-carboxyvinyltransferase of Bradyrhizobium sp. (strain ORS 278).